A 209-amino-acid chain; its full sequence is NAD(P)H-quinone oxidoreductase subunit I (209 aa).

4Fe-4S ferredoxin-type domains lie at 55 to 84 (GRIH…VDWE) and 95 to 124 (KHYS…MTEE). Residues cysteine 64, cysteine 67, cysteine 70, cysteine 74, cysteine 104, cysteine 107, cysteine 110, and cysteine 114 each contribute to the [4Fe-4S] cluster site.

This sequence belongs to the complex I 23 kDa subunit family. NDH-1 is composed of at least 11 different subunits. Requires [4Fe-4S] cluster as cofactor.

The protein resides in the cellular thylakoid membrane. It catalyses the reaction a plastoquinone + NADH + (n+1) H(+)(in) = a plastoquinol + NAD(+) + n H(+)(out). The enzyme catalyses a plastoquinone + NADPH + (n+1) H(+)(in) = a plastoquinol + NADP(+) + n H(+)(out). NDH-1 shuttles electrons from an unknown electron donor, via FMN and iron-sulfur (Fe-S) centers, to quinones in the respiratory and/or the photosynthetic chain. The immediate electron acceptor for the enzyme in this species is believed to be plastoquinone. Couples the redox reaction to proton translocation, and thus conserves the redox energy in a proton gradient. This chain is NAD(P)H-quinone oxidoreductase subunit I, found in Trichodesmium erythraeum (strain IMS101).